A 733-amino-acid chain; its full sequence is Methylmalonyl-CoA mutase large subunit (733 aa).

Over residues 1 to 10 (MRIPEFDDIE) the composition is skewed to acidic residues. The interval 1-22 (MRIPEFDDIELGAGGGPSGSAE) is disordered. Residues Tyr78, Met81, Thr88, Arg90, Tyr92, and Ser117 each coordinate (R)-methylmalonyl-CoA. Residues Phe120 and Ala142 each contribute to the cob(II)alamin site. Residues Thr198 and Gln200 each contribute to the (R)-methylmalonyl-CoA site. Residues Val209 and Arg210 each contribute to the cob(II)alamin site. Residues Arg210, His247, Arg286, and Ser288 each contribute to the (R)-methylmalonyl-CoA site. Residues Gly336, Glu373, Ala376, Gly612, His613, Asp614, Arg615, Ser658, Leu660, Gly689, and Thr712 each contribute to the cob(II)alamin site. Positions 600-732 (RPRILVAKMG…KRLAADLGHE (133 aa)) constitute a B12-binding domain.

Belongs to the methylmalonyl-CoA mutase family. Heterodimer of an alpha and a beta chain. Requires adenosylcob(III)alamin as cofactor.

The enzyme catalyses (R)-methylmalonyl-CoA = succinyl-CoA. Its function is as follows. Catalyzes the isomerization of succinyl-CoA to methylmalonyl-CoA during synthesis of propionate from tricarboxylic acid-cycle intermediates. This conversion most likely represents an important source of building blocks for polyketide antibiotic biosynthesis. It is unable to catalyze the conversion of isobutyryl-CoA into N-butyryl-CoA. This chain is Methylmalonyl-CoA mutase large subunit (mutB), found in Streptomyces virginiae (Streptomyces cinnamonensis).